Reading from the N-terminus, the 294-residue chain is Acetyl-coenzyme A carboxylase carboxyl transferase subunit beta (294 aa).

In terms of domain architecture, CoA carboxyltransferase N-terminal spans 29–294 (LWEKCPECGQ…TQEVKLQTNA (266 aa)). The Zn(2+) site is built by Cys33, Cys36, Cys52, and Cys55. The segment at 33-55 (CPECGQVVYRKDLIDNCSVCSNC) adopts a C4-type zinc-finger fold.

It belongs to the AccD/PCCB family. Acetyl-CoA carboxylase is a heterohexamer composed of biotin carboxyl carrier protein (AccB), biotin carboxylase (AccC) and two subunits each of ACCase subunit alpha (AccA) and ACCase subunit beta (AccD). The cofactor is Zn(2+).

Its subcellular location is the cytoplasm. It catalyses the reaction N(6)-carboxybiotinyl-L-lysyl-[protein] + acetyl-CoA = N(6)-biotinyl-L-lysyl-[protein] + malonyl-CoA. It participates in lipid metabolism; malonyl-CoA biosynthesis; malonyl-CoA from acetyl-CoA: step 1/1. Its function is as follows. Component of the acetyl coenzyme A carboxylase (ACC) complex. Biotin carboxylase (BC) catalyzes the carboxylation of biotin on its carrier protein (BCCP) and then the CO(2) group is transferred by the transcarboxylase to acetyl-CoA to form malonyl-CoA. This is Acetyl-coenzyme A carboxylase carboxyl transferase subunit beta from Prochlorococcus marinus (strain NATL1A).